Consider the following 189-residue polypeptide: Marginal zone B- and B1-cell-specific protein (189 aa).

An N-terminal signal peptide occupies residues 1-16; the sequence is MRLSLLLLLPLLGAWA. 3 disulfide bridges follow: Cys50–Cys178, Cys53–Cys171, and Cys95–Cys143. The short motif at 186-189 is the Prevents secretion from ER element; it reads RTEL.

This sequence belongs to the MZB1 family. In terms of assembly, part of the ER chaperone complex, a multi-protein complex in the endoplasmic reticulum containing a large number of molecular chaperones which associates with unassembled incompletely folded immunoglobulin heavy chains. Interacts with HSP90B1 and PDIA3 in a calcium-dependent manner. Post-translationally, forms an interchain disulfide bond with IgM monomers.

It localises to the endoplasmic reticulum lumen. The protein localises to the secreted. Associates with immunoglobulin M (IgM) heavy and light chains and promotes IgM assembly and secretion. May exert its effect by acting as a molecular chaperone or as an oxidoreductase as it displays a low level of oxidoreductase activity. Helps to diversify peripheral B-cell functions by regulating Ca(2+) stores, antibody secretion, and integrin activation. Its function is as follows. Acts as a hormone-regulated adipokine/pro-inflammatory cytokine that is implicated in causing chronic inflammation, affecting cellular expansion and blunting insulin response in adipocytes. May have a role in the onset of insulin resistance. In Bos taurus (Bovine), this protein is Marginal zone B- and B1-cell-specific protein (MZB1).